A 222-amino-acid polypeptide reads, in one-letter code: Thiol:disulfide interchange protein DsbL (222 aa).

The signal sequence occupies residues 1 to 27 (MSKLGISSLFKTILLTAALAVSFTASA). Residues 28 to 221 (FTEGTDYMVL…MADLIRELAS (194 aa)) form the Thioredoxin domain. Cysteine 56 and cysteine 59 are disulfide-bonded.

It belongs to the thioredoxin family. DsbL subfamily. Interacts with DsbI.

The protein resides in the periplasm. In terms of biological role, involved in disulfide-bond formation. Acts by transferring its disulfide bond to other proteins. Part of a redox system composed of DsbI and DsbL that mediates formation of an essential disulfide bond in AssT. In Escherichia coli O6:H1 (strain CFT073 / ATCC 700928 / UPEC), this protein is Thiol:disulfide interchange protein DsbL.